The following is a 134-amino-acid chain: Cytochrome b5 (134 aa).

A2 is modified (N-acetylalanine). 3 positions are modified to N6-acetyllysine: K7, K10, and K19. The 77-residue stretch at 9-85 (VKYYTLEEIQ…SKTYIIGELH (77 aa)) folds into the Cytochrome b5 heme-binding domain. Residues H44 and H68 each coordinate heme. The helical transmembrane segment at 109 to 131 (WWTNWVIPAISALAVALMYRLYM) threads the bilayer.

Belongs to the cytochrome b5 family.

It is found in the endoplasmic reticulum membrane. The protein localises to the microsome membrane. Its function is as follows. Cytochrome b5 is a membrane-bound hemoprotein functioning as an electron carrier for several membrane-bound oxygenases. It is also involved in several steps of the sterol biosynthesis pathway, particularly in the C-5 double bond introduction during the C-5 desaturation. The chain is Cytochrome b5 (Cyb5a) from Mus musculus (Mouse).